Reading from the N-terminus, the 380-residue chain is Cytochrome b (380 aa).

A run of 4 helical transmembrane segments spans residues 34 to 54 (FGSL…LLAA), 78 to 99 (WLIR…YLHI), 114 to 134 (WNTG…GYVL), and 179 to 199 (FFTL…IHLT). Residues His84 and His98 each contribute to the heme b site. His183 and His197 together coordinate heme b. His202 contributes to the a ubiquinone binding site. 4 helical membrane-spanning segments follow: residues 227–247 (LKDI…ALFS), 289–309 (LGGV…PLLH), 321–341 (FSQL…WVGS), and 348–368 (FIII…ILFP).

Belongs to the cytochrome b family. In terms of assembly, the cytochrome bc1 complex contains 11 subunits: 3 respiratory subunits (MT-CYB, CYC1 and UQCRFS1), 2 core proteins (UQCRC1 and UQCRC2) and 6 low-molecular weight proteins (UQCRH/QCR6, UQCRB/QCR7, UQCRQ/QCR8, UQCR10/QCR9, UQCR11/QCR10 and a cleavage product of UQCRFS1). This cytochrome bc1 complex then forms a dimer. Heme b serves as cofactor.

The protein resides in the mitochondrion inner membrane. Component of the ubiquinol-cytochrome c reductase complex (complex III or cytochrome b-c1 complex) that is part of the mitochondrial respiratory chain. The b-c1 complex mediates electron transfer from ubiquinol to cytochrome c. Contributes to the generation of a proton gradient across the mitochondrial membrane that is then used for ATP synthesis. This is Cytochrome b (MT-CYB) from Antigone rubicunda (Brolga crane).